Reading from the N-terminus, the 102-residue chain is Neuropeptide F (102 aa).

The N-terminal stretch at 1-26 is a signal peptide; sequence MCQTMRCILVACVALALLAAGCRVEA. A propeptide spanning residues 27–32 is cleaved from the precursor; the sequence is SNSRPP. Phe62 is modified (phenylalanine amide). Positions 66 to 102 are excised as a propeptide; it reads GSLMDILRNHEMDNINLGKNANNGGEFARGFNEEEIF.

Belongs to the NPY family. In terms of tissue distribution, expressed in midgut, brain lobes and ventral nerve cord of larvae. Predominantly expressed in two pairs of protocerebral neurons in the larval CNS (at protein level). Intense expression is also seen in the fan-shaped body of the central complex and two lateral areas of the lower part of the central brain that appear to harbor the giant commissural interneurons of the giant fiber pathway (at protein level). Upon glucose feeding, two additional dNPFergic neurons are consistently detected on the ventromedial surface of the subesophageal ganglion (SEG) of third instars larvae. Expressed in a subset of sugar-responsive PAIN neurons in the thoracic body but is absent from other peripheral PAIN neurons.

It localises to the secreted. Functionally, integral part of the sensory system that mediates food signaling, providing the neural basis for the regulation of food response; coordinates larval foraging and social behavior changes during development. Required in dopaminergic (DA) neurons that innervate the mushroom body for satiety to suppress appetitive memory performance; a key factor in the internal state of hunger in the brain. NPF neurons coordinately modulate diverse sensory and motor neurons important for feeding, flight, and locomotion. NPF/NPFR pathway exerts its suppressive effect on larval aversion to diverse stressful stimuli (chemical stress and noxious heat) through attenuation of TRP channel-induced neuronal excitation. NPF neural signaling system plays a physiological role in acute modulation of alcohol sensitivity in adults, rather than a general response to intoxication by sedative agents. Activation and inhibition of the NPF system reduces and enhances ethanol preference, respectively. Sexual experience, the NPF system activity and ethanol consumption are all linked; sexual deprivation is a major contributor to enhanced ethanol preference. In Drosophila melanogaster (Fruit fly), this protein is Neuropeptide F (NPF).